Consider the following 341-residue polypeptide: Cyclic GMP-AMP synthase-like receptor (341 aa).

ATP is bound by residues S64 and E77–D79. Residues E77, D79, and D172 each coordinate Mg(2+). D172 serves as a coordination point for GTP. Residues K230 and S246–K250 each bind ATP. E258 contacts Mn(2+).

Belongs to the mab-21 family. Requires Mg(2+) as cofactor. Mn(2+) serves as cofactor.

The catalysed reaction is GTP + ATP = 2',3'-cGAMP + 2 diphosphate. The enzyme catalyses GTP + ATP = pppGp(2'-5')A + diphosphate. It catalyses the reaction pppGp(2'-5')A = 2',3'-cGAMP + diphosphate. In terms of biological role, nucleotidyltransferase that catalyzes the formation of cyclic GMP-AMP (2',3'-cGAMP) from ATP and GTP and plays a key role in innate immunity. Acts as a key sensor of double-stranded RNA (dsRNA), the presence of dsRNA in the cytoplasm being a danger signal that triggers the immune responses. Directly binds dsRNA, activating the nucleotidyltransferase activity, leading to synthesis of 2',3'-cGAMP, a second messenger that binds to and activates Sting, thereby triggering the immune response via activation of the NF-kappa-B transcription factor. This Hydra vulgaris (Hydra) protein is Cyclic GMP-AMP synthase-like receptor.